The sequence spans 1027 residues: A-factor-processing enzyme (1027 aa).

Residue histidine 118 participates in Zn(2+) binding. Glutamate 121 serves as the catalytic Proton acceptor. Histidine 122 and glutamate 199 together coordinate Zn(2+).

This sequence belongs to the peptidase M16 family. The cofactor is Zn(2+).

The protein resides in the membrane. Its activity is regulated as follows. Inhibited by chelating agents like EDTA, TPEN and 1,1-phenanthroline, as well as NEM, free cysteine and DTT. In terms of biological role, involved in the N-terminal endoproteolytic cleavage of the P2 precursor of the a-factor mating pheromone. Capable of proteolysing the established mammalian insulin-degrading enzymes (IDEs) substrates amyloid-beta peptide and insulin B-chain. This chain is A-factor-processing enzyme (STE23), found in Saccharomyces cerevisiae (strain ATCC 204508 / S288c) (Baker's yeast).